Consider the following 160-residue polypeptide: Cytochrome b6-f complex subunit 4 (160 aa).

A run of 3 helical transmembrane segments spans residues 36-56 (LLYI…GLAV), 95-115 (LLGV…PFLE), and 131-151 (TVFL…TLPI).

The protein belongs to the cytochrome b family. PetD subfamily. The 4 large subunits of the cytochrome b6-f complex are cytochrome b6, subunit IV (17 kDa polypeptide, petD), cytochrome f and the Rieske protein, while the 4 small subunits are petG, petL, petM and petN. The complex functions as a dimer.

The protein localises to the plastid. The protein resides in the chloroplast thylakoid membrane. In terms of biological role, component of the cytochrome b6-f complex, which mediates electron transfer between photosystem II (PSII) and photosystem I (PSI), cyclic electron flow around PSI, and state transitions. This chain is Cytochrome b6-f complex subunit 4, found in Oryza nivara (Indian wild rice).